The following is a 426-amino-acid chain: MLAILGFVMMIVFMYLIMSNRLSALIALIVVPIVFALISGFGKDLGEMMIQGVTDLAPTGIMLLFAILYFGIMIDSGLFDPLIAKILSFVKGDPLKIAVGTAVLTMTISLDGDGTTTYMITIAAMLPLYKRLGMNRLVLAGIAMLGSGVMNIIPWGGPTARVLASLKLDTSEVFTPLIPAMIAGILWVIAVAYILGKKERKRLGVISIDHAPSSDPEAAPLKRPALQWFNLLLTVALMAALITSLLPLPVLFMTAFAVALMVNYPNVKEQQKRISAHAGNALNVVSMVFAAGIFTGILSGTKMVDAMAHSLVSLIPDAMGPHLPLITAIVSMPFTFFMSNDAFYFGVLPIIAEAASAYGIDAAEIGRASLLGQPVHLLSPLVPSTYLLVGMAGVSFGDHQKFTIKWAVGTTIVMTIAALLIGIISF.

The next 12 membrane-spanning stretches (helical) occupy residues 1–21 (MLAI…MSNR), 22–42 (LSAL…SGFG), 59–79 (TGIM…SGLF), 86–106 (ILSF…VLTM), 137–157 (LVLA…PWGG), 176–196 (PLIP…YILG), 232–252 (LLTV…PVLF), 278–298 (AGNA…TGIL), 318–338 (AMGP…TFFM), 343–363 (FYFG…IDAA), 377–397 (LLSP…VSFG), and 406–426 (WAVG…IISF).

It belongs to the CitM (TC 2.A.11) transporter family.

It localises to the cell membrane. In terms of biological role, transports the free citrate anion. Probably cotransports citrate and at least three or four protons. The citrate uptake is inhibited by the presence of magnesium ions. The chain is Citrate transporter (citN) from Bacillus subtilis (strain 168).